Here is a 242-residue protein sequence, read N- to C-terminus: Biosynthetic peptidoglycan transglycosylase (242 aa).

Residues Leu-19–Val-39 traverse the membrane as a helical segment.

This sequence belongs to the glycosyltransferase 51 family.

The protein resides in the cell inner membrane. It carries out the reaction [GlcNAc-(1-&gt;4)-Mur2Ac(oyl-L-Ala-gamma-D-Glu-L-Lys-D-Ala-D-Ala)](n)-di-trans,octa-cis-undecaprenyl diphosphate + beta-D-GlcNAc-(1-&gt;4)-Mur2Ac(oyl-L-Ala-gamma-D-Glu-L-Lys-D-Ala-D-Ala)-di-trans,octa-cis-undecaprenyl diphosphate = [GlcNAc-(1-&gt;4)-Mur2Ac(oyl-L-Ala-gamma-D-Glu-L-Lys-D-Ala-D-Ala)](n+1)-di-trans,octa-cis-undecaprenyl diphosphate + di-trans,octa-cis-undecaprenyl diphosphate + H(+). Its pathway is cell wall biogenesis; peptidoglycan biosynthesis. In terms of biological role, peptidoglycan polymerase that catalyzes glycan chain elongation from lipid-linked precursors. This is Biosynthetic peptidoglycan transglycosylase from Escherichia coli (strain 55989 / EAEC).